A 347-amino-acid polypeptide reads, in one-letter code: Fatty acid elongase 2 (347 aa).

At 1–62 (MNSLVTQYAA…PSEFQFIAGE (62 aa)) the chain is on the lumenal side. N-linked (GlcNAc...) asparagine glycosylation is present at asparagine 32. Residues 63 to 83 (LPLSTLPPVLYAITAYYVIIF) traverse the membrane as a helical segment. Topologically, residues 84–96 (GGRFLLSKSKPFK) are cytoplasmic. A helical transmembrane segment spans residues 97–119 (LNGLFQLHNLVLTSLSLTLLLLM). The Lumenal segment spans residues 120 to 122 (VEQ). A helical transmembrane segment spans residues 123–142 (LVPIIVQHGLYFAICNIGAW). The Cytoplasmic segment spans residues 143–146 (TQPL). Residues 147–169 (VTLYYMNYIVKFIEFIDTFFLVL) form a helical membrane-spanning segment. Residues 170-200 (KHKKLTFLHTYHHGATALLCYTQLMGTTSIS) are Lumenal-facing. Positions 178–182 (HTYHH) match the HxxHH motif motif. Residues 201–221 (WVPISLNLGVHVVMYWYYFLA) form a helical membrane-spanning segment. Topologically, residues 222–231 (ARGIRVWWKE) are cytoplasmic. Residues 232–254 (WVTRFQIIQFVLDIGFIYFAVYQ) traverse the membrane as a helical segment. Residues 255–275 (KAVHLYFPILPHCGDCVGSTT) are Lumenal-facing. The helical transmembrane segment at 276–296 (ATFAGCAIISSYLVLFISFYI) threads the bilayer. Residues 297 to 347 (NVYKRKGTKTSRVVKRAHGGVAAKVNEYVNVDLKNVPTPSPSPKPQHRRKR) are Cytoplasmic-facing. Position 334 is a phosphothreonine (threonine 334). Serine 336 and serine 338 each carry phosphoserine. A Di-lysine-like motif motif is present at residues 344-347 (RRKR).

This sequence belongs to the ELO family.

Its subcellular location is the endoplasmic reticulum membrane. The catalysed reaction is a very-long-chain acyl-CoA + malonyl-CoA + H(+) = a very-long-chain 3-oxoacyl-CoA + CO2 + CoA. The enzyme catalyses octadecanoyl-CoA + malonyl-CoA + H(+) = 3-oxoeicosanoyl-CoA + CO2 + CoA. It carries out the reaction hexadecanoyl-CoA + malonyl-CoA + H(+) = 3-oxooctadecanoyl-CoA + CO2 + CoA. It catalyses the reaction eicosanoyl-CoA + malonyl-CoA + H(+) = 3-oxodocosanoyl-CoA + CO2 + CoA. The catalysed reaction is docosanoyl-CoA + malonyl-CoA + H(+) = 3-oxotetracosanoyl-CoA + CO2 + CoA. Its function is as follows. Component of a microsomal membrane-bound long-chain fatty acid elongation system, which produces the 20-26-carbon very long-chain fatty acids (VLCFA) from long-chain fatty acid precursors and is involved ceramide and inositol sphingolipid biosynthesis. Component of elongase II, which elongates 16-18 carbon fatty acyl-CoAs such as palmitoyl-CoA and stearoyl-CoA to 20-22-carbon fatty acids by incorporation of malonyl-CoA. Involved in the synthesis of 1,3-beta-glucan. The enzymes active site faces the cytosol, whereas VLCFA length is determined by a lysine near the luminal end of transmembrane helix 6. Plays an important role in lipotoxic cell death induced by oleic acid through maintaining a balanced fatty acid composition in thr plasma membrane. The protein is Fatty acid elongase 2 of Saccharomyces cerevisiae (strain ATCC 204508 / S288c) (Baker's yeast).